The following is a 247-amino-acid chain: Ribonuclease 3 (247 aa).

Residues 21–149 (FKKLSKKIGI…LVGAIYLDRG (129 aa)) form the RNase III domain. Glutamate 62 is a binding site for Mg(2+). Residue aspartate 66 is part of the active site. 2 residues coordinate Mg(2+): asparagine 135 and glutamate 138. Residue glutamate 138 is part of the active site. Residues 176 to 245 (DYKTQLQEYS…AKELYIRIRR (70 aa)) enclose the DRBM domain.

Belongs to the ribonuclease III family. In terms of assembly, homodimer. The cofactor is Mg(2+).

It is found in the cytoplasm. It catalyses the reaction Endonucleolytic cleavage to 5'-phosphomonoester.. Its function is as follows. Digests double-stranded RNA. Involved in the processing of primary rRNA transcript to yield the immediate precursors to the large and small rRNAs (23S and 16S). Processes some mRNAs, and tRNAs when they are encoded in the rRNA operon. Processes pre-crRNA and tracrRNA of type II CRISPR loci if present in the organism. This chain is Ribonuclease 3, found in Leptospira borgpetersenii serovar Hardjo-bovis (strain L550).